A 333-amino-acid chain; its full sequence is MIDITLPLTDIHRHLDGNIRAQTILDLGRQFNIALPAQTLETLIPHVQVTSTEPDLVSFLTKLDWGVKVLASLDACRRVAFENIEDAARNGLHYVELRFSPGYMAMAHQLPIAGVVEAVIDGVRDGCNTFGVEARLIGIMSRTFGEAACLQELDALLAHRENITALDLAGDELGFPGSLFLSHFNRARDAGWHITVHAGEAAGPESIWQAIRELGAERIGHGVKAVEDRALMDFLVQQRIGIESCLTSNIQTSTIASLADHPLKTFLEHGVLASLNTDDPAVQGVDIIHEYHVAAPAAGLSREQIRQAQINGLEIAFLSDGEKRALREKVAAA.

Zn(2+) is bound by residues H12 and H14. Substrate-binding residues include H14, D16, and G170. A Zn(2+)-binding site is contributed by H197. The active-site Proton donor is the E200. A Zn(2+)-binding site is contributed by D278. D279 contributes to the substrate binding site.

The protein belongs to the metallo-dependent hydrolases superfamily. Adenosine and AMP deaminases family. Adenosine deaminase subfamily. It depends on Zn(2+) as a cofactor.

It carries out the reaction adenosine + H2O + H(+) = inosine + NH4(+). It catalyses the reaction 2'-deoxyadenosine + H2O + H(+) = 2'-deoxyinosine + NH4(+). Catalyzes the hydrolytic deamination of adenosine and 2-deoxyadenosine. This chain is Adenosine deaminase, found in Salmonella gallinarum (strain 287/91 / NCTC 13346).